Reading from the N-terminus, the 457-residue chain is uncharacterized protein (457 aa).

Residues 10–69 (ALLQGQTVTVPITALAAGGDGIARLTDGRVLFVAGAVPGDTVEARLVHLKKDHGFGKILQ) form the TRAM domain. Residues cysteine 82, cysteine 88, cysteine 91, and cysteine 170 each coordinate [4Fe-4S] cluster. S-adenosyl-L-methionine-binding residues include glutamine 294, tyrosine 323, glutamate 344, and aspartate 387. Cysteine 414 (nucleophile) is an active-site residue.

The protein belongs to the class I-like SAM-binding methyltransferase superfamily. RNA M5U methyltransferase family.

This is an uncharacterized protein from Gloeobacter violaceus (strain ATCC 29082 / PCC 7421).